Here is a 454-residue protein sequence, read N- to C-terminus: tRNA modification GTPase MnmE (454 aa).

The (6S)-5-formyl-5,6,7,8-tetrahydrofolate site is built by Arg23, Glu80, and Lys120. Residues 216–377 (GMKVVIAGRP…LRDHLKQSMG (162 aa)) form the TrmE-type G domain. Asn226 provides a ligand contact to K(+). Residues 226–231 (NAGKSS), 245–251 (TDIAGTT), 270–273 (DTAG), 335–338 (NKAD), and 358–360 (SAR) contribute to the GTP site. Ser230 contributes to the Mg(2+) binding site. Thr245, Ile247, and Thr250 together coordinate K(+). Thr251 is a Mg(2+) binding site. (6S)-5-formyl-5,6,7,8-tetrahydrofolate is bound at residue Lys454.

The protein belongs to the TRAFAC class TrmE-Era-EngA-EngB-Septin-like GTPase superfamily. TrmE GTPase family. In terms of assembly, homodimer. Heterotetramer of two MnmE and two MnmG subunits. It depends on K(+) as a cofactor.

The protein localises to the cytoplasm. Functionally, exhibits a very high intrinsic GTPase hydrolysis rate. Involved in the addition of a carboxymethylaminomethyl (cmnm) group at the wobble position (U34) of certain tRNAs, forming tRNA-cmnm(5)s(2)U34. This Yersinia pestis bv. Antiqua (strain Antiqua) protein is tRNA modification GTPase MnmE.